Consider the following 122-residue polypeptide: Large ribosomal subunit protein uL14 (122 aa).

The protein belongs to the universal ribosomal protein uL14 family. Part of the 50S ribosomal subunit. Forms a cluster with proteins L3 and L19. In the 70S ribosome, L14 and L19 interact and together make contacts with the 16S rRNA in bridges B5 and B8.

Its function is as follows. Binds to 23S rRNA. Forms part of two intersubunit bridges in the 70S ribosome. The sequence is that of Large ribosomal subunit protein uL14 from Christiangramia forsetii (strain DSM 17595 / CGMCC 1.15422 / KT0803) (Gramella forsetii).